Here is a 103-residue protein sequence, read N- to C-terminus: Large ribosomal subunit protein uL24 (103 aa).

It belongs to the universal ribosomal protein uL24 family. As to quaternary structure, part of the 50S ribosomal subunit.

One of two assembly initiator proteins, it binds directly to the 5'-end of the 23S rRNA, where it nucleates assembly of the 50S subunit. Its function is as follows. One of the proteins that surrounds the polypeptide exit tunnel on the outside of the subunit. The polypeptide is Large ribosomal subunit protein uL24 (Geobacillus sp. (strain WCH70)).